We begin with the raw amino-acid sequence, 202 residues long: Na(+)-translocating NADH-quinone reductase subunit E (202 aa).

A run of 6 helical transmembrane segments spans residues 11–31 (SVFIENMALSFFLGMCTFLAV), 35–55 (VTTAMGLGVAVIVVLAISVPA), 79–99 (LSFLKFITFIGVIAALVQILE), 114–134 (GIFLPLITVNCAIFGAVAFMV), 144–164 (LVFGVGSGIGWALAIVLLAAV), and 180–200 (LGITFISAGLMALGFMSFSGV).

Belongs to the NqrDE/RnfAE family. Composed of six subunits; NqrA, NqrB, NqrC, NqrD, NqrE and NqrF.

The protein resides in the cell inner membrane. The enzyme catalyses a ubiquinone + n Na(+)(in) + NADH + H(+) = a ubiquinol + n Na(+)(out) + NAD(+). Functionally, NQR complex catalyzes the reduction of ubiquinone-1 to ubiquinol by two successive reactions, coupled with the transport of Na(+) ions from the cytoplasm to the periplasm. NqrA to NqrE are probably involved in the second step, the conversion of ubisemiquinone to ubiquinol. The sequence is that of Na(+)-translocating NADH-quinone reductase subunit E from Shewanella denitrificans (strain OS217 / ATCC BAA-1090 / DSM 15013).